The primary structure comprises 50 residues: Small integral membrane protein 46 (50 aa).

A helical membrane pass occupies residues 15–37 (TTFQLWLQLLLWAHLAVRFLGYL).

The protein localises to the membrane. This chain is Small integral membrane protein 46, found in Homo sapiens (Human).